We begin with the raw amino-acid sequence, 165 residues long: 6,7-dimethyl-8-ribityllumazine synthase (165 aa).

5-amino-6-(D-ribitylamino)uracil is bound by residues Phe22, Ser56–Glu58, and Ala80–Ile82. Glu85–Thr86 is a (2S)-2-hydroxy-3-oxobutyl phosphate binding site. Catalysis depends on His88, which acts as the Proton donor. Phe113 is a binding site for 5-amino-6-(D-ribitylamino)uracil. Position 127 (Arg127) interacts with (2S)-2-hydroxy-3-oxobutyl phosphate.

Belongs to the DMRL synthase family.

It catalyses the reaction (2S)-2-hydroxy-3-oxobutyl phosphate + 5-amino-6-(D-ribitylamino)uracil = 6,7-dimethyl-8-(1-D-ribityl)lumazine + phosphate + 2 H2O + H(+). The protein operates within cofactor biosynthesis; riboflavin biosynthesis; riboflavin from 2-hydroxy-3-oxobutyl phosphate and 5-amino-6-(D-ribitylamino)uracil: step 1/2. Functionally, catalyzes the formation of 6,7-dimethyl-8-ribityllumazine by condensation of 5-amino-6-(D-ribitylamino)uracil with 3,4-dihydroxy-2-butanone 4-phosphate. This is the penultimate step in the biosynthesis of riboflavin. In Thermotoga petrophila (strain ATCC BAA-488 / DSM 13995 / JCM 10881 / RKU-1), this protein is 6,7-dimethyl-8-ribityllumazine synthase.